The following is a 104-amino-acid chain: Large ribosomal subunit protein uL24 (104 aa).

It belongs to the universal ribosomal protein uL24 family. Part of the 50S ribosomal subunit.

One of two assembly initiator proteins, it binds directly to the 5'-end of the 23S rRNA, where it nucleates assembly of the 50S subunit. Its function is as follows. One of the proteins that surrounds the polypeptide exit tunnel on the outside of the subunit. The chain is Large ribosomal subunit protein uL24 from Dichelobacter nodosus (strain VCS1703A).